A 278-amino-acid chain; its full sequence is Small ribosomal subunit protein uS3 (278 aa).

The 69-residue stretch at 38–106 folds into the KH type-2 domain; the sequence is IRKLLATGLE…QVQLNILEVK (69 aa). Positions 215–278 are disordered; that stretch reads AAAAPAGADR…AAGQPETTES (64 aa). The segment covering 238-278 has biased composition (low complexity); the sequence is SGASGTTATSTDAGRAATEEAPATDAAATAPAAGQPETTES.

The protein belongs to the universal ribosomal protein uS3 family. In terms of assembly, part of the 30S ribosomal subunit. Forms a tight complex with proteins S10 and S14.

Its function is as follows. Binds the lower part of the 30S subunit head. Binds mRNA in the 70S ribosome, positioning it for translation. This Mycolicibacterium gilvum (strain PYR-GCK) (Mycobacterium gilvum (strain PYR-GCK)) protein is Small ribosomal subunit protein uS3.